Consider the following 502-residue polypeptide: Lysine--tRNA ligase (502 aa).

Positions 399 and 406 each coordinate Mg(2+).

It belongs to the class-II aminoacyl-tRNA synthetase family. In terms of assembly, homodimer. Requires Mg(2+) as cofactor.

The protein localises to the cytoplasm. It catalyses the reaction tRNA(Lys) + L-lysine + ATP = L-lysyl-tRNA(Lys) + AMP + diphosphate. This is Lysine--tRNA ligase from Synechococcus sp. (strain RCC307).